Consider the following 227-residue polypeptide: 7-cyano-7-deazaguanine synthase (227 aa).

ATP is bound at residue 8–18; it reads FSGGQDSTTCL. Zn(2+) is bound by residues Cys-187, Cys-196, Cys-199, and Cys-202.

It belongs to the QueC family. The cofactor is Zn(2+).

It carries out the reaction 7-carboxy-7-deazaguanine + NH4(+) + ATP = 7-cyano-7-deazaguanine + ADP + phosphate + H2O + H(+). The protein operates within purine metabolism; 7-cyano-7-deazaguanine biosynthesis. In terms of biological role, catalyzes the ATP-dependent conversion of 7-carboxy-7-deazaguanine (CDG) to 7-cyano-7-deazaguanine (preQ(0)). The chain is 7-cyano-7-deazaguanine synthase from Aliivibrio fischeri (strain MJ11) (Vibrio fischeri).